A 592-amino-acid polypeptide reads, in one-letter code: Aspartate--tRNA ligase (592 aa).

E177 contributes to the L-aspartate binding site. Residues 201-204 (QIFK) form an aspartate region. Position 223 (R223) interacts with L-aspartate. ATP contacts are provided by residues 223 to 225 (RDE) and Q232. L-aspartate is bound at residue H451. Position 485 (E485) interacts with ATP. R492 is an L-aspartate binding site. ATP is bound at residue 537-540 (GLDR).

Belongs to the class-II aminoacyl-tRNA synthetase family. Type 1 subfamily. Homodimer.

Its subcellular location is the cytoplasm. It carries out the reaction tRNA(Asp) + L-aspartate + ATP = L-aspartyl-tRNA(Asp) + AMP + diphosphate. Its function is as follows. Catalyzes the attachment of L-aspartate to tRNA(Asp) in a two-step reaction: L-aspartate is first activated by ATP to form Asp-AMP and then transferred to the acceptor end of tRNA(Asp). The polypeptide is Aspartate--tRNA ligase (Bacillus licheniformis (strain ATCC 14580 / DSM 13 / JCM 2505 / CCUG 7422 / NBRC 12200 / NCIMB 9375 / NCTC 10341 / NRRL NRS-1264 / Gibson 46)).